Here is a 281-residue protein sequence, read N- to C-terminus: Fructose-bisphosphate aldolase class 1 (281 aa).

Lysine 191 acts as the Schiff-base intermediate with dihydroxyacetone-P in catalysis.

The protein belongs to the DeoC/FbaB aldolase family. As to quaternary structure, homooctamer.

Its subcellular location is the cytoplasm. It carries out the reaction beta-D-fructose 1,6-bisphosphate = D-glyceraldehyde 3-phosphate + dihydroxyacetone phosphate. Activated by citrate. In Pyrococcus furiosus (strain ATCC 43587 / DSM 3638 / JCM 8422 / Vc1), this protein is Fructose-bisphosphate aldolase class 1 (fba).